The following is an 828-amino-acid chain: Periplasmic nitrate reductase (828 aa).

Residues 1–31 (MKLSRRSFMKANAVAAAAAAAGLSVPGVARA) constitute a signal peptide (tat-type signal). The 4Fe-4S Mo/W bis-MGD-type domain occupies 39–95 (IKWDKAPCRFCGTGCGVLVGTQQGRVVACQGDPDAPVNRGLNCIKGYFLPKIMYGKD). Positions 46, 49, 53, and 81 each coordinate [4Fe-4S] cluster. Mo-bis(molybdopterin guanine dinucleotide) contacts are provided by residues K83, Q150, N175, C179, 212–219 (WGANMAEM), 243–247 (STYQH), 262–264 (QSD), M372, Q376, N482, 508–509 (SD), K531, D558, and 718–727 (TGRVLEHWHT). F794 is a substrate binding site. Mo-bis(molybdopterin guanine dinucleotide)-binding residues include N802 and K819.

The protein belongs to the prokaryotic molybdopterin-containing oxidoreductase family. NasA/NapA/NarB subfamily. In terms of assembly, component of the periplasmic nitrate reductase NapAB complex composed of NapA and NapB. [4Fe-4S] cluster serves as cofactor. The cofactor is Mo-bis(molybdopterin guanine dinucleotide). Predicted to be exported by the Tat system. The position of the signal peptide cleavage has not been experimentally proven.

It localises to the periplasm. It catalyses the reaction 2 Fe(II)-[cytochrome] + nitrate + 2 H(+) = 2 Fe(III)-[cytochrome] + nitrite + H2O. Catalytic subunit of the periplasmic nitrate reductase complex NapAB. Receives electrons from NapB and catalyzes the reduction of nitrate to nitrite. This is Periplasmic nitrate reductase from Escherichia coli O6:K15:H31 (strain 536 / UPEC).